The primary structure comprises 399 residues: Transcription termination factor 1, mitochondrial (399 aa).

Residues 1-57 (MQSLSLGQTSISKGLNYLTIMAPGNLWHMRNNFLFGSRCWMTRFSAENIFKSVSFRL) constitute a mitochondrion transit peptide. Interaction with DNA regions lie at residues 169-170 (RS), 247-251 (QSTKR), 324-331 (AEKKFNDK), 355-358 (SIST), and 384-391 (SKKRYEAK).

This sequence belongs to the mTERF family. In terms of assembly, monomer. Phosphoprotein with mostly four phosphate groups. While the DNA-binding activity is unaffected by the phosphorylation state, only the phosphorylated form of the protein is active for termination activity. Functioning seems to be regulated by phosphorylation.

It localises to the mitochondrion. Transcription termination factor. Binds to a 28 bp region within the tRNA(Leu(uur)) gene at a position immediately adjacent to and downstream of the 16S rRNA gene; this region comprises a tridecamer sequence critical for directing accurate termination. Binds DNA along the major grove and promotes DNA bending and partial unwinding. Promotes base flipping. Transcription termination activity appears to be polarized with highest specificity for transcripts initiated on the light strand. This Homo sapiens (Human) protein is Transcription termination factor 1, mitochondrial (MTERF1).